The sequence spans 421 residues: Aspartokinase (421 aa).

ATP is bound at residue 7–10 (KYGG). Residue 25–30 (RIVATK) coordinates substrate. S41 provides a ligand contact to ATP. Residues 45-49 (DTTDE), E74, 125-126 (LD), 151-154 (RGGS), and S154 each bind substrate. Residues 174–175 (SD), 180–185 (YTADPR), and K210 each bind ATP. 2 ACT domains span residues 267-343 (VTVL…YDDQ) and 349-421 (LVGA…GTGR). Substrate-binding positions include D274, 274–279 (DKPGEA), 292–294 (NID), Q298, 360–361 (VT), 374–375 (NV), and 381–382 (SE).

The protein belongs to the aspartokinase family. Tetramer consisting of 2 isoforms Alpha (catalytic and regulation) and of a homodimer of 2 isoforms Beta (regulation).

The enzyme catalyses L-aspartate + ATP = 4-phospho-L-aspartate + ADP. The protein operates within amino-acid biosynthesis; L-lysine biosynthesis via DAP pathway; (S)-tetrahydrodipicolinate from L-aspartate: step 1/4. It participates in amino-acid biosynthesis; L-methionine biosynthesis via de novo pathway; L-homoserine from L-aspartate: step 1/3. It functions in the pathway amino-acid biosynthesis; L-threonine biosynthesis; L-threonine from L-aspartate: step 1/5. Catalyzes the phosphorylation of the beta-carboxyl group of aspartic acid with ATP to yield 4-phospho-L-aspartate, which is involved in the branched biosynthetic pathway leading to the biosynthesis of amino acids lysine, threonine, isoleucine and methionine. This is Aspartokinase (lysC) from Corynebacterium efficiens (strain DSM 44549 / YS-314 / AJ 12310 / JCM 11189 / NBRC 100395).